The chain runs to 197 residues: Putative peptidyl-prolyl cis-trans isomerase (197 aa).

In terms of domain architecture, PPIase cyclophilin-type spans 14–195 (GEIKVVMHTN…HDVVIESIDV (182 aa)).

Belongs to the cyclophilin-type PPIase family.

The enzyme catalyses [protein]-peptidylproline (omega=180) = [protein]-peptidylproline (omega=0). Functionally, PPIases accelerate the folding of proteins. It catalyzes the cis-trans isomerization of proline imidic peptide bonds in oligopeptides. In Staphylococcus aureus (strain COL), this protein is Putative peptidyl-prolyl cis-trans isomerase.